Here is a 129-residue protein sequence, read N- to C-terminus: GYLGGYAAPAYAGYAAPAYAGYAAPAYAAPVAAVAHAAPAVAVAHAPVPSSAANTYRISQTARLAYAAPAVAHAPLAYAAPAVAHAPLGYAAPAYGVARYAAAAPALGYGYGAYGYAAPALGYGHALVH.

10 tandem repeats follow at residues 7–10 (AAPA), 15–18 (AAPA), 23–26 (AAPA), 28–31 (AAPV), 37–40 (AAPA), 67–70 (AAPA), 79–82 (AAPA), 91–94 (AAPA), 103–106 (AAPA), and 117–120 (AAPA).

Component of the cuticle of migratory locust which contains more than 100 different structural proteins. The sequence is that of Cuticle protein 12.5 from Locusta migratoria (Migratory locust).